We begin with the raw amino-acid sequence, 277 residues long: Zinc finger protein 511 (277 aa).

3 consecutive C2H2-type zinc fingers follow at residues 96-121 (FRCH…NALH), 123-146 (NVCS…LEWH), and 160-185 (YECL…IRTH). The disordered stretch occupies residues 225-244 (ESSESMDFSLTPEPVETEPM).

The protein belongs to the krueppel C2H2-type zinc-finger protein family.

The protein resides in the nucleus. Its function is as follows. May be involved in transcriptional regulation. In Danio rerio (Zebrafish), this protein is Zinc finger protein 511 (znf511).